The following is a 205-amino-acid chain: Meiotic nuclear division protein 1 homolog (205 aa).

The residue at position 2 (Ser2) is an N-acetylserine. A coiled-coil region spans residues 83–173 (KRKLEALNSQ…EAANRWTDNI (91 aa)).

Belongs to the MND1 family. In terms of assembly, heterodimer with PSMC3IP/HOP2. MND1-PSMC3IP interacts with DMC1 and RAD51 and binds to ssDNA and dsDNA showing no preference for either form of DNA.

It localises to the nucleus. Functionally, required for proper homologous chromosome pairing and efficient cross-over and intragenic recombination during meiosis. Stimulates both DMC1- and RAD51-mediated homologous strand assimilation, which is required for the resolution of meiotic double-strand breaks. The polypeptide is Meiotic nuclear division protein 1 homolog (Mus musculus (Mouse)).